Consider the following 422-residue polypeptide: ATP-dependent Clp protease ATP-binding subunit ClpX 1 (422 aa).

The ClpX-type ZB domain maps to 4-57 (DRKNRESGKLLYCSFCGKSQHEVRKLIAGPAVFVCDECVELCNDIIREDLQGSE). The Zn(2+) site is built by C16, C19, C38, and C41. ATP is bound at residue 120–127 (PTGSGKTL).

It belongs to the ClpX chaperone family. Component of the ClpX-ClpP complex. Forms a hexameric ring that, in the presence of ATP, binds to fourteen ClpP subunits assembled into a disk-like structure with a central cavity, resembling the structure of eukaryotic proteasomes.

Its function is as follows. ATP-dependent specificity component of the Clp protease. It directs the protease to specific substrates. Can perform chaperone functions in the absence of ClpP. The chain is ATP-dependent Clp protease ATP-binding subunit ClpX 1 from Methylococcus capsulatus (strain ATCC 33009 / NCIMB 11132 / Bath).